A 442-amino-acid polypeptide reads, in one-letter code: Hydroxycinnamoyltransferase 1 (442 aa).

Active-site proton acceptor residues include His-159 and Asp-389.

The protein belongs to the plant acyltransferase family. Expressed in roots, leaves, stems and seeds.

In terms of biological role, hydroxycinnamoyl transferase that catalyzes the transfer of an acyl from p-coumaryol-CoA to various acyl acceptors. Can use feruloyl-CoA and caffeoyl-CoA as acyl donors. This chain is Hydroxycinnamoyltransferase 1, found in Oryza sativa subsp. japonica (Rice).